Reading from the N-terminus, the 104-residue chain is Large ribosomal subunit protein uL24 (104 aa).

Belongs to the universal ribosomal protein uL24 family. In terms of assembly, part of the 50S ribosomal subunit.

In terms of biological role, one of two assembly initiator proteins, it binds directly to the 5'-end of the 23S rRNA, where it nucleates assembly of the 50S subunit. Its function is as follows. One of the proteins that surrounds the polypeptide exit tunnel on the outside of the subunit. The protein is Large ribosomal subunit protein uL24 of Shewanella piezotolerans (strain WP3 / JCM 13877).